A 456-amino-acid chain; its full sequence is L-seryl-tRNA(Sec) selenium transferase (456 aa).

At lysine 288 the chain carries N6-(pyridoxal phosphate)lysine.

It belongs to the SelA family. The cofactor is pyridoxal 5'-phosphate.

It is found in the cytoplasm. It carries out the reaction L-seryl-tRNA(Sec) + selenophosphate + H(+) = L-selenocysteinyl-tRNA(Sec) + phosphate. It participates in aminoacyl-tRNA biosynthesis; selenocysteinyl-tRNA(Sec) biosynthesis; selenocysteinyl-tRNA(Sec) from L-seryl-tRNA(Sec) (bacterial route): step 1/1. In terms of biological role, converts seryl-tRNA(Sec) to selenocysteinyl-tRNA(Sec) required for selenoprotein biosynthesis. In Helicobacter hepaticus (strain ATCC 51449 / 3B1), this protein is L-seryl-tRNA(Sec) selenium transferase.